The primary structure comprises 586 residues: ATP-dependent lipid A-core flippase (586 aa).

The next 4 membrane-spanning stretches (helical) occupy residues 25–45, 74–94, 163–183, and 264–284; these read AYFIISFIGFGVFAAMEAQLI, LWFVPISVVVLSIIRGIGAYF, VAWFLAMMLIINWKLTLAFIC, and VLHIVLALALAVTFYLIMILW. The 290-residue stretch at 28-317 folds into the ABC transmembrane type-1 domain; that stretch reads IISFIGFGVF…LTKINSIIQK (290 aa). Residues 349-583 enclose the ABC transporter domain; sequence VELKDVHFGY…SGVYANLYHS (235 aa). Residue 382–389 coordinates ATP; it reads GSSGSGKS.

It belongs to the ABC transporter superfamily. Lipid exporter (TC 3.A.1.106) family. Homodimer.

It localises to the cell inner membrane. It catalyses the reaction ATP + H2O + lipid A-core oligosaccharideSide 1 = ADP + phosphate + lipid A-core oligosaccharideSide 2.. Functionally, involved in lipopolysaccharide (LPS) biosynthesis. Translocates lipid A-core from the inner to the outer leaflet of the inner membrane. Transmembrane domains (TMD) form a pore in the inner membrane and the ATP-binding domain (NBD) is responsible for energy generation. This chain is ATP-dependent lipid A-core flippase, found in Saccharophagus degradans (strain 2-40 / ATCC 43961 / DSM 17024).